Consider the following 873-residue polypeptide: Potassium voltage-gated channel subfamily KQT member 3 (873 aa).

Residues 1 to 41 (MGLKARRAAGAAGGGGGEGGGGGGGAANPAGGDSAVAGDEE) form a disordered region. At 1-121 (MGLKARRAAG…IYDALERPRG (121 aa)) the chain is on the cytoplasmic side. Over residues 11–26 (AAGGGGGEGGGGGGGA) the composition is skewed to gly residues. At threonine 82 the chain carries Phosphothreonine. A helical membrane pass occupies residues 122–144 (WALLYHALVFLIVLGCLILAVLT). Topologically, residues 145-154 (TFKEYETVSG) are extracellular. Residues 155–176 (DWLLLLETFAIFIFGAEFALRI) traverse the membrane as a helical segment. Over 177 to 194 (WAAGCCCRYKGWRGRLKF) the chain is Cytoplasmic. The helical transmembrane segment at 195 to 214 (ARKPLCMLDIFVLIASVPVV) threads the bilayer. Over 215–226 (AVGNQGNVLATS) the chain is Extracellular. The helical; Voltage-sensor transmembrane segment at 227 to 245 (LRSLRFLQILRMLRMDRRG) threads the bilayer. Arginine 244 contacts a 1,2-diacyl-sn-glycero-3-phospho-(1D-myo-inositol-4,5-bisphosphate). At 246-257 (GTWKLLGSAICA) the chain is on the cytoplasmic side. A helical transmembrane segment spans residues 258-283 (HSKELITAWYIGFLTLILSSFLVYLV). Position 260 (lysine 260) interacts with a 1,2-diacyl-sn-glycero-3-phospho-(1D-myo-inositol-4,5-bisphosphate). The Extracellular portion of the chain corresponds to 284 to 303 (EKDVPEMDAQGEEMKEEFET). The pore-forming intramembrane region spans 304 to 316 (YADALWWGLITLA). The Selectivity filter motif lies at 317 to 322 (TIGYGD). The Extracellular segment spans residues 317 to 327 (TIGYGDKTPKT). The chain crosses the membrane as a helical span at residues 328 to 354 (WEGRLIAATFSLIGVSFFALPAGILGS). At 355 to 873 (GLALKVQEQH…SIWTPSNKPT (519 aa)) the chain is on the cytoplasmic side. Residues 357-538 (ALKVQEQHRQ…RLYKKKFKET (182 aa)) form a mediates interaction with calmodulin region. Residue lysine 367 participates in a 1,2-diacyl-sn-glycero-3-phospho-(1D-myo-inositol-4,5-bisphosphate) binding. Disordered stretches follow at residues 575–603 (PGPPSTPKHKKSQKGSAFTYPSQQSPRNE), 723–742 (RGGPSSTKAQANLPSSGSTY), and 766–873 (ELQG…NKPT). Polar residues-rich tracts occupy residues 588–601 (KGSAFTYPSQQSPR), 725–741 (GPSSTKAQANLPSSGST), and 844–873 (DPFTPSGSMPMSSTGDGISDSIWTPSNKPT).

This sequence belongs to the potassium channel family. KQT (TC 1.A.1.15) subfamily. Kv7.3/KCNQ3 sub-subfamily. Heterotetramer with KCNQ2; forms heterotetrameric M-channel responsible for the native M-current. Interacts with calmodulin; the interaction is calcium-independent, constitutive and participates in the proper assembly of a functional M-channel. Heteromultimer with KCNQ5. May associate with KCNE2. Interacts with IQCJ-SCHIP1. Interacts (via the pore module) with SLC5A3/SMIT1; forms a coregulatory complex that alters ion selectivity, voltage dependence and gating kinetics of the channel. In terms of processing, KCNQ2/KCNQ3 are ubiquitinated by NEDD4L. Ubiquitination leads to protein degradation. Degradation induced by NEDD4L is inhibited by USP36. Expressed in brain and sympathetic ganglia. In brain, expressed in cortex, hippocampus and at much lower levels in cerebellum. In sympathetic ganglia, expressed at approximately equal levels in both superior cervical ganglia and prevertebral ganglia.

Its subcellular location is the cell membrane. It catalyses the reaction K(+)(in) = K(+)(out). The enzyme catalyses Rb(+)(in) = Rb(+)(out). It carries out the reaction Cs(+)(in) = Cs(+)(out). The catalysed reaction is Na(+)(in) = Na(+)(out). Its activity is regulated as follows. Phosphatidylinositol-4,5-bisphosphate (PIP2) potentiates the activation of KCNQ channels by enhancing the electro-mechanical coupling of the voltage-sensing domain (VSD) and the pore-forming domain (PD). In the closed state of the channel, PIP2 is anchored at the S2-S3 loop; upon channel activation, PIP2 interacts with the S4-S5 linker and is involved in channel gating. Calcium suppresses KCNQ2-KCNQ3 channel currents, with calcium-bound calmodulin inducing a change in channel configuration which leads to the reduction of channel affinity for PIP2 and subsequent current suppression. M-channel is blocked by XE991. In terms of biological role, pore-forming subunit of the voltage-gated potassium (Kv) M-channel which is responsible for the M-current, a key controller of neuronal excitability. M-channel is composed of pore-forming subunits KCNQ2 and KCNQ3 assembled as heterotetramers, each subunit containing a voltage sensing domain (VSD) and a pore-forming domain (PD). The native M-current has a slowly activating and deactivating potassium conductance which plays a critical role in determining the subthreshold electrical excitability of neurons as well as the responsiveness to synaptic inputs. M-channel is selectively permeable in vitro to other cations besides potassium, in decreasing order of affinity K(+) &gt; Rb(+) &gt; Cs(+) &gt; Na(+). M-channel association with SLC5A3/SMIT1 alters channel ion selectivity, increasing Na(+) and Cs(+) permeation relative to K(+). Suppressed by activation of M1 muscarinic acetylcholine receptors. KCNQ3 also associates with KCNQ5 to form a functional channel in vitro and may also contribute to the M-current in brain. The chain is Potassium voltage-gated channel subfamily KQT member 3 from Rattus norvegicus (Rat).